We begin with the raw amino-acid sequence, 706 residues long: Protein argonaute (706 aa).

Residues 1-108 form an N-terminal domain region; it reads MGKEALLNLY…ELFRDFLTKT (108 aa). The linker L1 stretch occupies residues 109–165; it reads KVKDKFISDFYKKFRDKITVQGKNRKIALIPEVNEKVLKSEEGYFLLHLDLKFRIQP. The 92-residue stretch at 168–259 folds into the PAZ domain; sequence TLQTLLERND…YPATILKPVL (92 aa). Positions 263–334 are linker L2; it reads NLEDEERNEV…AKGKNTKVIT (72 aa). A mid domain region spans residues 335–448; sequence NLRKFLELCR…YDFVKRELLK (114 aa). One can recognise a Piwi domain in the interval 419–694; that stretch reads LVIVFLEEYP…ITKLMLRGIE (276 aa). Residues 449–706 are PIWI domain; sequence KMIPSQVILN…KKEGDIMYWL (258 aa). Catalysis depends on residues aspartate 502, glutamate 541, and aspartate 571. Aspartate 502 serves as a coordination point for Mn(2+). Aspartate 571 contacts Mn(2+). The tract at residues 612-650 is PIWI box; it reads FIKGYFYKLSEDSVILATYNQVYEGTHQPIKVRKVYGEL. Aspartate 683 is a catalytic residue. Aspartate 683 lines the Mn(2+) pocket.

The protein belongs to the argonaute family. Long pAgo subfamily. Mg(2+) serves as cofactor.

Its function is as follows. A DNA-guided RNA endonuclease. Uses short ssDNA sequences as guides (gDNA) to bind complementary target strands, resulting in cleavage of the target RNA. The cleavage site is 10 nucleotides downstream of the residue base paired with the 5'-end of the gDNA. Binds ssDNA better than ssRNA, binds dsDNA and DNA-RNA hybrids but does not bind dsRNA. A 2 nucleotide 3'-overhang (possibly on the guide strand) may help load nucleic acids into the complex. The protein is Protein argonaute of Aquifex aeolicus (strain VF5).